A 534-amino-acid chain; its full sequence is Membrane protein insertase YidC (534 aa).

5 helical membrane passes run 7-27 (IIAV…SEYM), 319-339 (AIDL…LDFF), 342-362 (YVGN…LVFW), 413-433 (GGCL…QALL), and 493-513 (VMMF…SGLV).

This sequence belongs to the OXA1/ALB3/YidC family. Type 1 subfamily. Interacts with the Sec translocase complex via SecD. Specifically interacts with transmembrane segments of nascent integral membrane proteins during membrane integration.

Its subcellular location is the cell inner membrane. Functionally, required for the insertion and/or proper folding and/or complex formation of integral membrane proteins into the membrane. Involved in integration of membrane proteins that insert both dependently and independently of the Sec translocase complex, as well as at least some lipoproteins. Aids folding of multispanning membrane proteins. The polypeptide is Membrane protein insertase YidC (Nitratidesulfovibrio vulgaris (strain ATCC 29579 / DSM 644 / CCUG 34227 / NCIMB 8303 / VKM B-1760 / Hildenborough) (Desulfovibrio vulgaris)).